A 484-amino-acid polypeptide reads, in one-letter code: tRNA sulfurtransferase (484 aa).

The region spanning R63–Q167 is the THUMP domain. ATP contacts are provided by residues L185 to M186, K267, G289, and Q298. A disulfide bond links C346 and C457. One can recognise a Rhodanese domain in the interval V405–P483. Catalysis depends on C457, which acts as the Cysteine persulfide intermediate.

The protein belongs to the ThiI family.

It localises to the cytoplasm. It carries out the reaction [ThiI sulfur-carrier protein]-S-sulfanyl-L-cysteine + a uridine in tRNA + 2 reduced [2Fe-2S]-[ferredoxin] + ATP + H(+) = [ThiI sulfur-carrier protein]-L-cysteine + a 4-thiouridine in tRNA + 2 oxidized [2Fe-2S]-[ferredoxin] + AMP + diphosphate. It catalyses the reaction [ThiS sulfur-carrier protein]-C-terminal Gly-Gly-AMP + S-sulfanyl-L-cysteinyl-[cysteine desulfurase] + AH2 = [ThiS sulfur-carrier protein]-C-terminal-Gly-aminoethanethioate + L-cysteinyl-[cysteine desulfurase] + A + AMP + 2 H(+). It functions in the pathway cofactor biosynthesis; thiamine diphosphate biosynthesis. In terms of biological role, catalyzes the ATP-dependent transfer of a sulfur to tRNA to produce 4-thiouridine in position 8 of tRNAs, which functions as a near-UV photosensor. Also catalyzes the transfer of sulfur to the sulfur carrier protein ThiS, forming ThiS-thiocarboxylate. This is a step in the synthesis of thiazole, in the thiamine biosynthesis pathway. The sulfur is donated as persulfide by IscS. This is tRNA sulfurtransferase from Pseudomonas aeruginosa (strain LESB58).